We begin with the raw amino-acid sequence, 53 residues long: Rubredoxin-1 (53 aa).

Positions 1-53 (MEKFVCDVCGYIYDPVVGDPDNGVAPGTKFKDIPDTWVCPLCKLDKTHFSKVE) constitute a Rubredoxin-like domain. Residues cysteine 6, cysteine 9, cysteine 39, and cysteine 42 each coordinate Fe cation.

This sequence belongs to the rubredoxin family. It depends on Fe(3+) as a cofactor.

Functionally, rubredoxin is a small nonheme, iron protein lacking acid-labile sulfide. Its single Fe, chelated to 4 Cys, functions as an electron acceptor and may also stabilize the conformation of the molecule. The polypeptide is Rubredoxin-1 (rubR1) (Clostridium perfringens (strain 13 / Type A)).